Here is a 728-residue protein sequence, read N- to C-terminus: Phosphoribosylformylglycinamidine synthase subunit PurL (728 aa).

His42 is an active-site residue. ATP contacts are provided by Tyr45 and Lys84. Residue Glu86 participates in Mg(2+) binding. Residues Ser87–His90 and Arg109 contribute to the substrate site. The active-site Proton acceptor is His88. Asp110 lines the Mg(2+) pocket. Gln237 provides a ligand contact to substrate. A Mg(2+)-binding site is contributed by Asp265. Glu309–Gln311 lines the substrate pocket. Residues Asp491 and Gly528 each coordinate ATP. Asn529 provides a ligand contact to Mg(2+). A substrate-binding site is contributed by Ser531.

This sequence belongs to the FGAMS family. Monomer. Part of the FGAM synthase complex composed of 1 PurL, 1 PurQ and 2 PurS subunits.

The protein localises to the cytoplasm. It carries out the reaction N(2)-formyl-N(1)-(5-phospho-beta-D-ribosyl)glycinamide + L-glutamine + ATP + H2O = 2-formamido-N(1)-(5-O-phospho-beta-D-ribosyl)acetamidine + L-glutamate + ADP + phosphate + H(+). It participates in purine metabolism; IMP biosynthesis via de novo pathway; 5-amino-1-(5-phospho-D-ribosyl)imidazole from N(2)-formyl-N(1)-(5-phospho-D-ribosyl)glycinamide: step 1/2. Its function is as follows. Part of the phosphoribosylformylglycinamidine synthase complex involved in the purines biosynthetic pathway. Catalyzes the ATP-dependent conversion of formylglycinamide ribonucleotide (FGAR) and glutamine to yield formylglycinamidine ribonucleotide (FGAM) and glutamate. The FGAM synthase complex is composed of three subunits. PurQ produces an ammonia molecule by converting glutamine to glutamate. PurL transfers the ammonia molecule to FGAR to form FGAM in an ATP-dependent manner. PurS interacts with PurQ and PurL and is thought to assist in the transfer of the ammonia molecule from PurQ to PurL. The polypeptide is Phosphoribosylformylglycinamidine synthase subunit PurL (Campylobacter jejuni (strain RM1221)).